The following is a 268-amino-acid chain: GTP cyclohydrolase FolE2 (268 aa).

The protein belongs to the GTP cyclohydrolase IV family.

The catalysed reaction is GTP + H2O = 7,8-dihydroneopterin 3'-triphosphate + formate + H(+). It participates in cofactor biosynthesis; 7,8-dihydroneopterin triphosphate biosynthesis; 7,8-dihydroneopterin triphosphate from GTP: step 1/1. Functionally, converts GTP to 7,8-dihydroneopterin triphosphate. This Ralstonia nicotianae (strain ATCC BAA-1114 / GMI1000) (Ralstonia solanacearum) protein is GTP cyclohydrolase FolE2.